Consider the following 226-residue polypeptide: N-acetyltransferase family 8 member 3 (226 aa).

2 consecutive transmembrane segments (helical) span residues 36-56 and 58-78; these read MLLL…LFLA and GSWL…WFLA. Positions 61–220 constitute an N-acetyltransferase domain; that stretch reads LLVLLSILTL…PMINLKYSLT (160 aa).

The protein belongs to the camello family.

Its subcellular location is the nucleus membrane. It is found in the cytoplasm. It localises to the perinuclear region. It carries out the reaction L-lysyl-[protein] + acetyl-CoA = N(6)-acetyl-L-lysyl-[protein] + CoA + H(+). In terms of biological role, has histone acetyltransferase activity in vitro, with specificity for histone H4. The chain is N-acetyltransferase family 8 member 3 from Mus musculus (Mouse).